Reading from the N-terminus, the 1853-residue chain is DNA-directed RNA polymerase II subunit RPB1 (1853 aa).

Residues Cys-66, Cys-69, Cys-76, His-79, Cys-106, Cys-109, Cys-149, and Cys-177 each coordinate Zn(2+). The lid loop stretch occupies residues Pro-256–Asp-268. The segment at Asn-314–Lys-331 is rudder loop. Mg(2+) is bound by residues Asp-489, Asp-491, and Asp-493. Residues Pro-827 to Glu-839 are bridging helix. Lys-1260 is covalently cross-linked (Glycyl lysine isopeptide (Lys-Gly) (interchain with G-Cter in ubiquitin)). Disordered stretches follow at residues Pro-1520 to Pro-1568 and Ser-1589 to Asn-1853. Low complexity-rich tracts occupy residues Ser-1589 to Pro-1811 and Tyr-1821 to Asn-1853. 26 repeat units span residues Tyr-1592–Ser-1598, Tyr-1599–Ala-1605, Tyr-1616–Ser-1622, Tyr-1623–Ser-1629, Tyr-1630–Ser-1636, Tyr-1637–Ser-1643, Tyr-1644–Ser-1650, Tyr-1651–Ser-1657, Tyr-1658–Ser-1664, Tyr-1665–Ser-1671, Tyr-1679–Thr-1685, Tyr-1686–Thr-1692, Tyr-1693–Thr-1699, Tyr-1700–Thr-1706, Tyr-1707–Ser-1713, Tyr-1717–Lys-1723, Tyr-1724–Thr-1730, Tyr-1731–Ser-1737, Tyr-1752–Thr-1758, Tyr-1759–Thr-1765, Tyr-1779–Thr-1785, Tyr-1786–Ser-1792, Tyr-1800–Thr-1806, Tyr-1821–Thr-1827, Tyr-1828–Thr-1834, and Tyr-1842–Thr-1848. The interval Tyr-1592–Thr-1848 is C-terminal domain (CTD); 26 X 7 AA approximate tandem repeats of Y-[ST]-P-[ST]-S-P-[AGKNQRST].

The protein belongs to the RNA polymerase beta' chain family. In terms of assembly, component of the RNA polymerase II (Pol II) complex consisting of 12 subunits. Interacts with sig-7. In terms of processing, the tandem 7 residues repeats in the C-terminal domain (CTD) can be highly phosphorylated. The phosphorylation activates Pol II. Phosphorylation occurs mainly at residues 'Ser-2' and 'Ser-5' of the heptapeptide repeat and starts at the 3- to 4-cell embryonic stage. This phosphorylation also occurs in the early stages of oocyte development and is not detected in oocytes arrested at the meiotic diakinesis stage. In the somatic lineage, phosphorylation at 'Ser-2' is mediated by cdk-12 downstream of cdk-9 whereas in the germline lineage cdk-12 phosphorylates 'Ser-2' independently of cdk-9. Phosphorylation is likely mediated by cdk-7. May be dephosphorylated by fcp-1 in diakinetic oocytes and in 1-cell and 2-cell embryos. Dephosphorylated at 'Ser-5' of the heptapeptide repeat by ssup-72. The phosphorylation state is believed to result from the balanced action of site-specific CTD kinases and phosphatase, and a 'CTD code' that specifies the position of Pol II within the transcription cycle has been proposed. Following transcription stress, the elongating form of RNA polymerase II (RNA pol IIo) is polyubiquitinated via 'Lys-63'-linkages on Lys-1260 at DNA damage sites without leading to degradation: ubiquitination promotes RNA pol IIo backtracking to allow access by the transcription-coupled nucleotide excision repair (TC-NER) machinery. Subsequent DEF1-dependent polyubiquitination by the elongin complex via 'Lys-48'-linkages may lead to proteasome-mediated degradation; presumably at stalled RNA pol II where TC-NER has failed, to halt global transcription and enable 'last resort' DNA repair pathways.

The protein localises to the nucleus. It localises to the chromosome. The catalysed reaction is RNA(n) + a ribonucleoside 5'-triphosphate = RNA(n+1) + diphosphate. Functionally, DNA-dependent RNA polymerase catalyzes the transcription of DNA into RNA using the four ribonucleoside triphosphates as substrates. Largest and catalytic component of RNA polymerase II which synthesizes mRNA precursors and many functional non-coding RNAs. Forms the polymerase active center together with the second largest subunit. Pol II is the central component of the basal RNA polymerase II transcription machinery. It is composed of mobile elements that move relative to each other. RPB1 is part of the core element with the central large cleft, the clamp element that moves to open and close the cleft and the jaws that are thought to grab the incoming DNA template. At the start of transcription, a single-stranded DNA template strand of the promoter is positioned within the central active site cleft of Pol II. A bridging helix emanates from RPB1 and crosses the cleft near the catalytic site and is thought to promote translocation of Pol II by acting as a ratchet that moves the RNA-DNA hybrid through the active site by switching from straight to bent conformations at each step of nucleotide addition. During transcription elongation, Pol II moves on the template as the transcript elongates. Elongation is influenced by the phosphorylation status of the C-terminal domain (CTD) of Pol II largest subunit (RPB1), which serves as a platform for assembly of factors that regulate transcription initiation, elongation, termination and mRNA processing. Involved in the transcription of several genes including those involved in embryogenesis. The protein is DNA-directed RNA polymerase II subunit RPB1 of Caenorhabditis briggsae.